Here is a 489-residue protein sequence, read N- to C-terminus: Putative BTB/POZ domain-containing protein R773 (489 aa).

One can recognise a BTB domain in the interval 3-73 (SNIELVITDE…GNTSYKFQDK (71 aa)).

It belongs to the mimivirus BTB/WD family.

This Acanthamoeba polyphaga (Amoeba) protein is Putative BTB/POZ domain-containing protein R773.